A 603-amino-acid polypeptide reads, in one-letter code: Elongation factor 4 (603 aa).

The 183-residue stretch at valine 7–proline 189 folds into the tr-type G domain. Residues aspartate 19–threonine 24 and asparagine 136–aspartate 139 contribute to the GTP site.

The protein belongs to the TRAFAC class translation factor GTPase superfamily. Classic translation factor GTPase family. LepA subfamily.

The protein resides in the cell inner membrane. It carries out the reaction GTP + H2O = GDP + phosphate + H(+). In terms of biological role, required for accurate and efficient protein synthesis under certain stress conditions. May act as a fidelity factor of the translation reaction, by catalyzing a one-codon backward translocation of tRNAs on improperly translocated ribosomes. Back-translocation proceeds from a post-translocation (POST) complex to a pre-translocation (PRE) complex, thus giving elongation factor G a second chance to translocate the tRNAs correctly. Binds to ribosomes in a GTP-dependent manner. The chain is Elongation factor 4 from Trichormus variabilis (strain ATCC 29413 / PCC 7937) (Anabaena variabilis).